The primary structure comprises 52 residues: MEKWQCTVCGYIYDPEVGDPTQNIPPGTKFEDLPDDWVCPDCGVGKDQFEKI.

A Rubredoxin-like domain is found at Met1–Ile52. The Fe cation site is built by Cys6, Cys9, Cys39, and Cys42.

The protein belongs to the rubredoxin family. Fe(3+) is required as a cofactor.

Its function is as follows. Rubredoxin is a small nonheme, iron protein lacking acid-labile sulfide. Its single Fe, chelated to 4 Cys, functions as an electron acceptor and may also stabilize the conformation of the molecule. The polypeptide is Rubredoxin (Thermoanaerobacterium thermosaccharolyticum (strain ATCC 7956 / DSM 571 / NCIMB 9385 / NCA 3814 / NCTC 13789 / WDCM 00135 / 2032) (Clostridium thermosaccharolyticum)).